A 102-amino-acid chain; its full sequence is RNA-binding protein Hfq (102 aa).

The region spanning 9–68 is the Sm domain; that stretch reads DPFLNALRRERVPVSIYLVNGIKLQGQIESFDQFVILLKNTVSQMVYKHAISTVVPSRPV. The interval 63-102 is disordered; the sequence is VPSRPVSHHSNNAGGGTSSNYHHGSSAQNTSAQQDSEETE. Residues 70 to 96 show a composition bias toward polar residues; sequence HHSNNAGGGTSSNYHHGSSAQNTSAQQ.

This sequence belongs to the Hfq family. Homohexamer.

In terms of biological role, RNA chaperone that binds small regulatory RNA (sRNAs) and mRNAs to facilitate mRNA translational regulation in response to envelope stress, environmental stress and changes in metabolite concentrations. Also binds with high specificity to tRNAs. The polypeptide is RNA-binding protein Hfq (Escherichia fergusonii (strain ATCC 35469 / DSM 13698 / CCUG 18766 / IAM 14443 / JCM 21226 / LMG 7866 / NBRC 102419 / NCTC 12128 / CDC 0568-73)).